The primary structure comprises 204 residues: LexA repressor (204 aa).

Residues 28–48 (VREIGQAVGLASSSTVHGHLS) constitute a DNA-binding region (H-T-H motif). Catalysis depends on for autocatalytic cleavage activity residues Ser-126 and Lys-164.

Belongs to the peptidase S24 family. As to quaternary structure, homodimer.

It carries out the reaction Hydrolysis of Ala-|-Gly bond in repressor LexA.. Represses a number of genes involved in the response to DNA damage (SOS response), including recA and lexA. In the presence of single-stranded DNA, RecA interacts with LexA causing an autocatalytic cleavage which disrupts the DNA-binding part of LexA, leading to derepression of the SOS regulon and eventually DNA repair. This Bacillus mycoides (strain KBAB4) (Bacillus weihenstephanensis) protein is LexA repressor.